Here is a 190-residue protein sequence, read N- to C-terminus: MSEDTALVVGLGNPGPQYEKTRHNVGFMVAGVLSARMGGKFSAHKKSGAEIVQGRFEGRPTILAKPRSFMNLSGSAVAGLARFFSVDPGNIVVIHDELDLDFGTIRLKQGGGEGGHNGLRSISSALGTKDYLRTRVGIGRPPGRMDPASYVLKPFSSVERKELDLVCEESADAVELVLRVGLEAAQNRLH.

Position 18 (Y18) interacts with tRNA. The Proton acceptor role is filled by H23. Positions 69, 71, and 117 each coordinate tRNA.

Belongs to the PTH family. As to quaternary structure, monomer.

Its subcellular location is the cytoplasm. The enzyme catalyses an N-acyl-L-alpha-aminoacyl-tRNA + H2O = an N-acyl-L-amino acid + a tRNA + H(+). Hydrolyzes ribosome-free peptidyl-tRNAs (with 1 or more amino acids incorporated), which drop off the ribosome during protein synthesis, or as a result of ribosome stalling. Functionally, catalyzes the release of premature peptidyl moieties from peptidyl-tRNA molecules trapped in stalled 50S ribosomal subunits, and thus maintains levels of free tRNAs and 50S ribosomes. The polypeptide is Peptidyl-tRNA hydrolase (Rhodococcus jostii (strain RHA1)).